Consider the following 160-residue polypeptide: Transcription elongation factor GreA (160 aa).

Positions Ser-49 to Ala-75 form a coiled coil.

Belongs to the GreA/GreB family.

Necessary for efficient RNA polymerase transcription elongation past template-encoded arresting sites. The arresting sites in DNA have the property of trapping a certain fraction of elongating RNA polymerases that pass through, resulting in locked ternary complexes. Cleavage of the nascent transcript by cleavage factors such as GreA or GreB allows the resumption of elongation from the new 3'terminus. GreA releases sequences of 2 to 3 nucleotides. This chain is Transcription elongation factor GreA, found in Clostridium botulinum (strain Alaska E43 / Type E3).